The chain runs to 259 residues: Pycsar effector protein RsmPycTIR (259 aa).

1-120 (MVGGDEVIAN…RRVHEDFSGR (120 aa)) lines the a nucleoside 3',5'-cyclic phosphate pocket. Residues 126 to 229 (LATGISRRTS…AEFQYQISSS (104 aa)) form a TIR-like region. 3 helical membrane-spanning segments follow: residues 136-156 (GWNWTVISLTAGVLSAAAIWY), 169-189 (VLLPLVVGLTIFLLTLLADPV), and 234-254 (QATALLAPIVLGALAAYLFWI).

Its subcellular location is the cell inner membrane. It catalyses the reaction NAD(+) + H2O = ADP-D-ribose + nicotinamide + H(+). Functionally, pycsar (pyrimidine cyclase system for antiphage resistance) provides immunity against bacteriophage. The pyrimidine cyclase (PycC) synthesizes cyclic nucleotides in response to infection; these serve as specific second messenger signals. The signals activate the adjacent effector, leading to bacterial cell death and abortive phage infection. A clade B Pycsar system. In terms of biological role, the effector gene of a two-gene Pycsar system. Expression of this and adjacent uridylate cyclase RsmPycC (AC A0A1V0HUX5) probably confers resistance to bacteriophage. The genes are probably only expressed in response to bacteriophage infection. Probably only responds to cUMP (produced by its cognate NTP cyclase), it may act by degrading NAD(+) and/or by impairing membrane integrity. The chain is Pycsar effector protein RsmPycTIR from Rhodovulum sp. (strain MB263).